Here is a 422-residue protein sequence, read N- to C-terminus: Phosphoribosylamine--glycine ligase (422 aa).

In terms of domain architecture, ATP-grasp spans 107–313 (KDLMKKYDIP…LVQVLLDLLD (207 aa)). Residue 133–194 (VQEKGAPIVI…EEYLSGEEFS (62 aa)) participates in ATP binding. Residues Glu-283 and Asn-285 each contribute to the Mg(2+) site.

This sequence belongs to the GARS family. Mg(2+) serves as cofactor. Requires Mn(2+) as cofactor.

The catalysed reaction is 5-phospho-beta-D-ribosylamine + glycine + ATP = N(1)-(5-phospho-beta-D-ribosyl)glycinamide + ADP + phosphate + H(+). Its pathway is purine metabolism; IMP biosynthesis via de novo pathway; N(1)-(5-phospho-D-ribosyl)glycinamide from 5-phospho-alpha-D-ribose 1-diphosphate: step 2/2. This is Phosphoribosylamine--glycine ligase from Bacillus subtilis (strain 168).